We begin with the raw amino-acid sequence, 375 residues long: tRNA-specific 2-thiouridylase MnmA (375 aa).

ATP is bound by residues Gly12 to Ser19 and Met38. Positions Asn98–Asp100 are interaction with target base in tRNA. The active-site Nucleophile is the Cys103. Cysteines 103 and 200 form a disulfide. Residue Gly127 participates in ATP binding. The interval Lys150–Gln152 is interaction with tRNA. Cys200 acts as the Cysteine persulfide intermediate in catalysis. Residues Arg312–Tyr313 form an interaction with tRNA region.

It belongs to the MnmA/TRMU family.

The protein resides in the cytoplasm. The enzyme catalyses S-sulfanyl-L-cysteinyl-[protein] + uridine(34) in tRNA + AH2 + ATP = 2-thiouridine(34) in tRNA + L-cysteinyl-[protein] + A + AMP + diphosphate + H(+). Its function is as follows. Catalyzes the 2-thiolation of uridine at the wobble position (U34) of tRNA, leading to the formation of s(2)U34. This chain is tRNA-specific 2-thiouridylase MnmA, found in Lactobacillus gasseri (strain ATCC 33323 / DSM 20243 / BCRC 14619 / CIP 102991 / JCM 1131 / KCTC 3163 / NCIMB 11718 / NCTC 13722 / AM63).